Reading from the N-terminus, the 525-residue chain is Protein nucleotidyltransferase YdiU (525 aa).

ATP contacts are provided by G107, G109, R110, K129, D141, G142, R192, and R199. Catalysis depends on D268, which acts as the Proton acceptor. 2 residues coordinate Mg(2+): N269 and D278. D278 contacts ATP.

The protein belongs to the SELO family. It depends on Mg(2+) as a cofactor. Requires Mn(2+) as cofactor.

The enzyme catalyses L-seryl-[protein] + ATP = 3-O-(5'-adenylyl)-L-seryl-[protein] + diphosphate. The catalysed reaction is L-threonyl-[protein] + ATP = 3-O-(5'-adenylyl)-L-threonyl-[protein] + diphosphate. It catalyses the reaction L-tyrosyl-[protein] + ATP = O-(5'-adenylyl)-L-tyrosyl-[protein] + diphosphate. It carries out the reaction L-histidyl-[protein] + UTP = N(tele)-(5'-uridylyl)-L-histidyl-[protein] + diphosphate. The enzyme catalyses L-seryl-[protein] + UTP = O-(5'-uridylyl)-L-seryl-[protein] + diphosphate. The catalysed reaction is L-tyrosyl-[protein] + UTP = O-(5'-uridylyl)-L-tyrosyl-[protein] + diphosphate. In terms of biological role, nucleotidyltransferase involved in the post-translational modification of proteins. It can catalyze the addition of adenosine monophosphate (AMP) or uridine monophosphate (UMP) to a protein, resulting in modifications known as AMPylation and UMPylation. The polypeptide is Protein nucleotidyltransferase YdiU (Ralstonia nicotianae (strain ATCC BAA-1114 / GMI1000) (Ralstonia solanacearum)).